Reading from the N-terminus, the 285-residue chain is 4-hydroxybenzoate octaprenyltransferase (285 aa).

Helical transmembrane passes span 33–53 (FLAA…LGVV), 93–113 (LILF…MNTL), 134–154 (ITYL…PMAY), 166–186 (WLLF…YAMV), 209–229 (LMIG…GIQL), 233–253 (SLYN…QWLI), and 265–285 (FLNN…SVLI).

The protein belongs to the UbiA prenyltransferase family. Mg(2+) is required as a cofactor.

Its subcellular location is the cell inner membrane. It carries out the reaction all-trans-octaprenyl diphosphate + 4-hydroxybenzoate = 4-hydroxy-3-(all-trans-octaprenyl)benzoate + diphosphate. Its pathway is cofactor biosynthesis; ubiquinone biosynthesis. Its function is as follows. Catalyzes the prenylation of para-hydroxybenzoate (PHB) with an all-trans polyprenyl group. Mediates the second step in the final reaction sequence of ubiquinone-8 (UQ-8) biosynthesis, which is the condensation of the polyisoprenoid side chain with PHB, generating the first membrane-bound Q intermediate 3-octaprenyl-4-hydroxybenzoate. This chain is 4-hydroxybenzoate octaprenyltransferase, found in Aliivibrio salmonicida (strain LFI1238) (Vibrio salmonicida (strain LFI1238)).